The chain runs to 180 residues: Outer-membrane lipoprotein LolB (180 aa).

Positions 1–16 (MIRRVLLLSLALLLAG) are cleaved as a signal peptide. Cys-17 is lipidated: N-palmitoyl cysteine. Cys-17 is lipidated: S-diacylglycerol cysteine.

Belongs to the LolB family. As to quaternary structure, monomer.

The protein localises to the cell outer membrane. Functionally, plays a critical role in the incorporation of lipoproteins in the outer membrane after they are released by the LolA protein. The protein is Outer-membrane lipoprotein LolB of Chromobacterium violaceum (strain ATCC 12472 / DSM 30191 / JCM 1249 / CCUG 213 / NBRC 12614 / NCIMB 9131 / NCTC 9757 / MK).